The following is a 384-amino-acid chain: Lipid-A-disaccharide synthase (384 aa).

It belongs to the LpxB family.

The catalysed reaction is a lipid X + a UDP-2-N,3-O-bis[(3R)-3-hydroxyacyl]-alpha-D-glucosamine = a lipid A disaccharide + UDP + H(+). It functions in the pathway bacterial outer membrane biogenesis; LPS lipid A biosynthesis. Its function is as follows. Condensation of UDP-2,3-diacylglucosamine and 2,3-diacylglucosamine-1-phosphate to form lipid A disaccharide, a precursor of lipid A, a phosphorylated glycolipid that anchors the lipopolysaccharide to the outer membrane of the cell. This chain is Lipid-A-disaccharide synthase, found in Cellvibrio japonicus (strain Ueda107) (Pseudomonas fluorescens subsp. cellulosa).